The sequence spans 600 residues: Zinc metalloproteinase-disintegrin-like stejnihagin-A (600 aa).

Residues 1-20 (MIEVLLVTICLAVFPYQGSS) form the signal peptide. The propeptide occupies 21–191 (IILESGNVND…KASQLVVTAE (171 aa)). Gln192 is modified (pyrrolidone carboxylic acid). One can recognise a Peptidase M12B domain in the interval 198–389 (RYVKLAIVAD…YNPQCILNAP (192 aa)). Cystine bridges form between Cys306-Cys384, Cys346-Cys368, and Cys348-Cys351. N-linked (GlcNAc...) asparagine glycosylation is present at Asn317. Zn(2+) is bound at residue His331. The active site involves Glu332. Residues His335 and His341 each coordinate Zn(2+). The N-linked (GlcNAc...) asparagine glycan is linked to Asn367. The Disintegrin domain occupies 397–483 (PPVCGNELLE…DCPTDDFHRN (87 aa)). Ca(2+) contacts are provided by Val399, Asn402, Leu404, Glu406, Glu409, and Asp412. 14 disulfides stabilise this stretch: Cys400/Cys429, Cys411/Cys424, Cys413/Cys419, Cys423/Cys446, Cys437/Cys443, Cys442/Cys468, Cys455/Cys475, Cys462/Cys494, Cys487/Cys499, Cys506/Cys556, Cys521/Cys565, Cys534/Cys544, Cys551/Cys587, and Cys581/Cys593. A D/ECD-tripeptide motif is present at residues 461 to 463 (ECD). An N-linked (GlcNAc...) asparagine glycan is attached at Asn568.

This sequence belongs to the venom metalloproteinase (M12B) family. P-III subfamily. P-IIIa sub-subfamily. As to quaternary structure, monomer. Requires Zn(2+) as cofactor. In terms of tissue distribution, expressed by the venom gland.

The protein resides in the secreted. In terms of biological role, this metalloproteinase-disintegrin-like impairs hemostasis in the envenomed animal. The polypeptide is Zinc metalloproteinase-disintegrin-like stejnihagin-A (Trimeresurus stejnegeri (Chinese green tree viper)).